The following is a 227-amino-acid chain: Prolactin (227 aa).

The first 28 residues, 1 to 28, serve as a signal peptide directing secretion; that stretch reads MNIKGSPWKGSLLLLLVSNLLLCQNVAP. Cysteine 32 and cysteine 39 are disulfide-bonded. Serine 54 is modified (phosphoserine). Asparagine 59 is a glycosylation site (N-linked (GlcNAc...) asparagine). Serine 62 and serine 118 each carry phosphoserine. 2 cysteine pairs are disulfide-bonded: cysteine 86–cysteine 202 and cysteine 219–cysteine 227.

It belongs to the somatotropin/prolactin family. In terms of assembly, interacts with PRLR.

It is found in the secreted. Its function is as follows. Prolactin acts primarily on the mammary gland by promoting lactation. This is Prolactin (PRL) from Macaca mulatta (Rhesus macaque).